We begin with the raw amino-acid sequence, 229 residues long: DNA repair protein RecO (229 aa).

It belongs to the RecO family.

Functionally, involved in DNA repair and RecF pathway recombination. In Legionella pneumophila (strain Corby), this protein is DNA repair protein RecO.